A 593-amino-acid chain; its full sequence is ATP-dependent lipid A-core flippase (593 aa).

Helical transmembrane passes span 33 to 55 (YIFL…YGFG), 67 to 87 (ILML…VGSF), 146 to 166 (AIIT…VMFV), 169 to 189 (WQLS…ISII), 258 to 278 (VIQI…AIFG), and 284 to 304 (GSSW…AAIL). Residues 38 to 319 (ADASMIYLIN…LTKVNVVIQK (282 aa)) enclose the ABC transmembrane type-1 domain. The region spanning 351 to 585 (VTIKDLSFAF…GGLYTGSINR (235 aa)) is the ABC transporter domain. 383 to 390 (GKSGSGKT) contributes to the ATP binding site.

Belongs to the ABC transporter superfamily. Lipid exporter (TC 3.A.1.106) family. As to quaternary structure, homodimer.

Its subcellular location is the cell membrane. It carries out the reaction ATP + H2O + lipid A-core oligosaccharideSide 1 = ADP + phosphate + lipid A-core oligosaccharideSide 2.. Functionally, involved in lipopolysaccharide (LPS) biosynthesis. Translocates lipid A-core from the inner to the outer leaflet of the inner membrane. Transmembrane domains (TMD) form a pore in the inner membrane and the ATP-binding domain (NBD) is responsible for energy generation. The chain is ATP-dependent lipid A-core flippase from Francisella novicida.